A 317-amino-acid polypeptide reads, in one-letter code: Transaldolase (317 aa).

The active-site Schiff-base intermediate with substrate is K126.

Belongs to the transaldolase family. Type 1 subfamily. In terms of assembly, homodimer.

It is found in the cytoplasm. It catalyses the reaction D-sedoheptulose 7-phosphate + D-glyceraldehyde 3-phosphate = D-erythrose 4-phosphate + beta-D-fructose 6-phosphate. It participates in carbohydrate degradation; pentose phosphate pathway; D-glyceraldehyde 3-phosphate and beta-D-fructose 6-phosphate from D-ribose 5-phosphate and D-xylulose 5-phosphate (non-oxidative stage): step 2/3. Transaldolase is important for the balance of metabolites in the pentose-phosphate pathway. This chain is Transaldolase, found in Burkholderia ambifaria (strain ATCC BAA-244 / DSM 16087 / CCUG 44356 / LMG 19182 / AMMD) (Burkholderia cepacia (strain AMMD)).